The following is a 169-amino-acid chain: Chorismate pyruvate-lyase (169 aa).

4 residues coordinate substrate: Met-35, Arg-77, Leu-115, and Glu-156.

The protein belongs to the UbiC family. Monomer.

It localises to the cytoplasm. The catalysed reaction is chorismate = 4-hydroxybenzoate + pyruvate. It functions in the pathway cofactor biosynthesis; ubiquinone biosynthesis. Its function is as follows. Removes the pyruvyl group from chorismate, with concomitant aromatization of the ring, to provide 4-hydroxybenzoate (4HB) for the ubiquinone pathway. In Cronobacter sakazakii (strain ATCC BAA-894) (Enterobacter sakazakii), this protein is Chorismate pyruvate-lyase.